Reading from the N-terminus, the 38-residue chain is Photosystem II reaction center protein L (38 aa).

A helical transmembrane segment spans residues 17 to 37 (SLYWGLLLIFVLAVLFSNYFF).

Belongs to the PsbL family. PSII is composed of 1 copy each of membrane proteins PsbA, PsbB, PsbC, PsbD, PsbE, PsbF, PsbH, PsbI, PsbJ, PsbK, PsbL, PsbM, PsbT, PsbX, PsbY, PsbZ, Psb30/Ycf12, at least 3 peripheral proteins of the oxygen-evolving complex and a large number of cofactors. It forms dimeric complexes.

The protein resides in the plastid. It localises to the chloroplast thylakoid membrane. In terms of biological role, one of the components of the core complex of photosystem II (PSII). PSII is a light-driven water:plastoquinone oxidoreductase that uses light energy to abstract electrons from H(2)O, generating O(2) and a proton gradient subsequently used for ATP formation. It consists of a core antenna complex that captures photons, and an electron transfer chain that converts photonic excitation into a charge separation. This subunit is found at the monomer-monomer interface and is required for correct PSII assembly and/or dimerization. This chain is Photosystem II reaction center protein L, found in Huperzia lucidula (Shining clubmoss).